We begin with the raw amino-acid sequence, 1183 residues long: MFKLKNFEAIKIGLASPEKIREWSRGEVKKPETINYRTLKPERDGLFCERIFGPTKDWECHCGKYKRVKYKGVVCDRCGVEVTRSKVRRERMGHIELAAPVAHIWYVKGIPSRMGLLLDMSPRALEKVLYFVSYVVIDPGDTPLTKKQLLSEKEYREYLEKYGNRFRAGMGAEAIKELLQEIDLEKLSKELRAEIKESTGQKRVRAIRRLEVVQAFIDSGNRPEWMILEVLPVIPPDLRPMVQLDGGRFATSDLNDLYRRVINRNNRLKKLLDLGAPDIIVRNEKRMLQEAVDALIDNGRRGRPVTGPGNRPLKSLSDMLKGKQGRFRQNLLGKRVDYSGRSVIVVGPELKVYQCGLPKEMALELFKPFVMKRLVDKGLAQHIKSAKRMVERVRPEVWDVLEEVIKEHPVLLNRAPTLHRLGIQAFEPVLVEGRAIKLHPLVCPAYNADFDGDQMAVHIPLSMEAQAEARFLMLAANNILKPQDGKPVMTPTQDMVLGCYYLTADEDGVPGEGKYFSSPEEALMAYQLGYIHIHAKIKVKMTREINGEKKSKVIETTVGKIIFNEAIPQDLGFVDRNNPETAFNLEINDLVDKSKLGKILDRVYRIHGPTKTAETLDKIKELGFKYSTKAAITISVSDMVIPKEKEKLLKEADEMVAKIEAQFRRGLISEEERYEKVIETWNMTTEKVTEALMATLDKFNPIFMMAHSGARGSKNQIRQLAGMRGLMADPSGRIIELPIRSNFREGLNVLEFFISTHGARKGLADTALRTADSGYLTRRLVDVSQDVIVREEDCGTDEGIYVEEIREGNEIIEKLSDRIIGRIAAEDIVDSEGNVIVRRNEMINEEEAEKIDKAGITRVKIRSPLTCRSRHGVCRMCYGRDLATGELVNIGEAVGIIAAQAIGEPGTQLTMRTFHTGGVAGVDITQGLPRVEELFEARKPKGLAVITEISGVVRINESKKRREITVVDEENNISKTYLIPYGSRLKVRDGQWVQAGDELTEGSVNPHDLLKIKGIYAVQSYLLQEVQKVYRLQGVEINDKHIEIIIRQMMKKVKVEDPGDTSMLPGELIDMFKFEEENKKAIEKGLRPATGRRALLGITKAALATDSFLSAASFQETTRVLTDAAIKGKVDPLIGLKENVIIGKLIPAGTGLSRYRNITVVKKEDQEKKEEVKKEAVDAKASS.

4 residues coordinate Zn(2+): Cys60, Cys62, Cys75, and Cys78. Residues Asp449, Asp451, and Asp453 each coordinate Mg(2+). Zn(2+) contacts are provided by Cys794, Cys867, Cys874, and Cys877.

The protein belongs to the RNA polymerase beta' chain family. As to quaternary structure, the RNAP catalytic core consists of 2 alpha, 1 beta, 1 beta' and 1 omega subunit. When a sigma factor is associated with the core the holoenzyme is formed, which can initiate transcription. Requires Mg(2+) as cofactor. Zn(2+) serves as cofactor.

The enzyme catalyses RNA(n) + a ribonucleoside 5'-triphosphate = RNA(n+1) + diphosphate. In terms of biological role, DNA-dependent RNA polymerase catalyzes the transcription of DNA into RNA using the four ribonucleoside triphosphates as substrates. This Caldanaerobacter subterraneus subsp. tengcongensis (strain DSM 15242 / JCM 11007 / NBRC 100824 / MB4) (Thermoanaerobacter tengcongensis) protein is DNA-directed RNA polymerase subunit beta'.